Consider the following 231-residue polypeptide: Small ribosomal subunit protein uS3 (231 aa).

In terms of domain architecture, KH type-2 spans 39 to 107 (IRELLHKELK…DVVINIVEIR (69 aa)).

It belongs to the universal ribosomal protein uS3 family. Part of the 30S ribosomal subunit. Forms a tight complex with proteins S10 and S14.

Functionally, binds the lower part of the 30S subunit head. Binds mRNA in the 70S ribosome, positioning it for translation. The protein is Small ribosomal subunit protein uS3 of Nitrobacter hamburgensis (strain DSM 10229 / NCIMB 13809 / X14).